The primary structure comprises 118 residues: Large ribosomal subunit protein bL20 (118 aa).

Belongs to the bacterial ribosomal protein bL20 family.

Its function is as follows. Binds directly to 23S ribosomal RNA and is necessary for the in vitro assembly process of the 50S ribosomal subunit. It is not involved in the protein synthesizing functions of that subunit. In Thermus thermophilus (strain ATCC BAA-163 / DSM 7039 / HB27), this protein is Large ribosomal subunit protein bL20.